We begin with the raw amino-acid sequence, 511 residues long: 2-isopropylmalate synthase (511 aa).

One can recognise a Pyruvate carboxyltransferase domain in the interval I5 to K267. Residues D14, H202, H204, and N238 each coordinate Mn(2+). The segment at K391 to S511 is regulatory domain.

It belongs to the alpha-IPM synthase/homocitrate synthase family. LeuA type 1 subfamily. As to quaternary structure, homodimer. Mn(2+) serves as cofactor.

The protein resides in the cytoplasm. It catalyses the reaction 3-methyl-2-oxobutanoate + acetyl-CoA + H2O = (2S)-2-isopropylmalate + CoA + H(+). It functions in the pathway amino-acid biosynthesis; L-leucine biosynthesis; L-leucine from 3-methyl-2-oxobutanoate: step 1/4. Catalyzes the condensation of the acetyl group of acetyl-CoA with 3-methyl-2-oxobutanoate (2-ketoisovalerate) to form 3-carboxy-3-hydroxy-4-methylpentanoate (2-isopropylmalate). In Staphylococcus saprophyticus subsp. saprophyticus (strain ATCC 15305 / DSM 20229 / NCIMB 8711 / NCTC 7292 / S-41), this protein is 2-isopropylmalate synthase.